Here is a 112-residue protein sequence, read N- to C-terminus: Large ribosomal subunit protein bL17 (112 aa).

The protein belongs to the bacterial ribosomal protein bL17 family. Part of the 50S ribosomal subunit. Contacts protein L32.

The chain is Large ribosomal subunit protein bL17 from Carboxydothermus hydrogenoformans (strain ATCC BAA-161 / DSM 6008 / Z-2901).